A 557-amino-acid polypeptide reads, in one-letter code: Acetylcholine receptor subunit alpha-L1 (557 aa).

A signal peptide spans M1–A23. Topologically, residues N24–F244 are extracellular. An N-linked (GlcNAc...) asparagine glycan is attached at N47. Cystine bridges form between C151–C165 and C224–C225. The N-linked (GlcNAc...) asparagine glycan is linked to N235. Helical transmembrane passes span Y245–L266, I274–I294, and Y308–V329. Over H330–G500 the chain is Cytoplasmic. A helical membrane pass occupies residues F501–F523.

This sequence belongs to the ligand-gated ion channel (TC 1.A.9) family. Acetylcholine receptor (TC 1.A.9.1) subfamily.

The protein localises to the postsynaptic cell membrane. Its subcellular location is the cell membrane. Its function is as follows. After binding acetylcholine, the AChR responds by an extensive change in conformation that affects all subunits and leads to opening of an ion-conducting channel across the plasma membrane. The polypeptide is Acetylcholine receptor subunit alpha-L1 (Schistocerca gregaria (Desert locust)).